The chain runs to 394 residues: LL-diaminopimelate aminotransferase (394 aa).

Substrate contacts are provided by tyrosine 14 and glycine 41. Pyridoxal 5'-phosphate-binding positions include tyrosine 71, 104 to 105, tyrosine 128, asparagine 174, tyrosine 205, and 233 to 235; these read AK and SFS. Substrate contacts are provided by lysine 105, tyrosine 128, and asparagine 174. Residue lysine 236 is modified to N6-(pyridoxal phosphate)lysine. Residues arginine 244 and asparagine 275 each contribute to the pyridoxal 5'-phosphate site. The substrate site is built by asparagine 275 and arginine 369.

It belongs to the class-I pyridoxal-phosphate-dependent aminotransferase family. LL-diaminopimelate aminotransferase subfamily. As to quaternary structure, homodimer. It depends on pyridoxal 5'-phosphate as a cofactor.

The catalysed reaction is (2S,6S)-2,6-diaminopimelate + 2-oxoglutarate = (S)-2,3,4,5-tetrahydrodipicolinate + L-glutamate + H2O + H(+). Its pathway is amino-acid biosynthesis; L-lysine biosynthesis via DAP pathway; LL-2,6-diaminopimelate from (S)-tetrahydrodipicolinate (aminotransferase route): step 1/1. Functionally, involved in the synthesis of meso-diaminopimelate (m-DAP or DL-DAP), required for both lysine and peptidoglycan biosynthesis. Catalyzes the direct conversion of tetrahydrodipicolinate to LL-diaminopimelate. This is LL-diaminopimelate aminotransferase from Chlamydia trachomatis serovar L2b (strain UCH-1/proctitis).